The following is a 48-amino-acid chain: Small, acid-soluble spore protein G (48 aa).

The span at 1–16 shows a compositional bias: basic and acidic residues; it reads MSENRHENEENRRDAA. Positions 1–48 are disordered; it reads MSENRHENEENRRDAAVAKVQNSGNAKVVVSVNTDQDQAQAQSQDGED. The span at 35-48 shows a compositional bias: low complexity; it reads DQDQAQAQSQDGED.

The polypeptide is Small, acid-soluble spore protein G (sspG) (Bacillus subtilis (strain 168)).